We begin with the raw amino-acid sequence, 442 residues long: Kelch domain-containing protein 10 (442 aa).

The segment at 1 to 58 (MSAAQGWDRNRRRGGGAAGGGGGGSGAGGGSGGNGGRGTGQLNRFVQLSGRPHLPGKK) is disordered. Arg13 carries the post-translational modification Omega-N-methylarginine. Over residues 15-39 (GGAAGGGGGGSGAGGGSGGNGGRGT) the composition is skewed to gly residues. 6 Kelch repeats span residues 87-154 (RPPP…PREL), 155-198 (ASMS…ALLS), 199-260 (CRGK…PEER), 261-319 (YRHE…RRCH), 320-364 (SCVQ…PEPV), and 365-403 (YFHC…LVVP). The segment at 401-442 (VVPSLLELAWEKLLAAFPNLANLSRTQLLHLGLTQGLIERLK) is interaction with CUL2.

The protein belongs to the KLHDC10 family. Component of a CRL2 E3 ubiquitin-protein ligase complex, also named ECS (Elongin BC-CUL2/5-SOCS-box protein) complex, composed of CUL2, Elongin BC (ELOB and ELOC), RBX1 and substrate-specific adapter KLHDC10. Interacts (via the 6 Kelch repeats) with PPP5C.

It is found in the nucleus. It localises to the cytoplasm. It functions in the pathway protein modification; protein ubiquitination. In terms of biological role, substrate-recognition component of a Cul2-RING (CRL2) E3 ubiquitin-protein ligase complex of the DesCEND (destruction via C-end degrons) pathway, which recognizes a C-degron located at the extreme C-terminus of target proteins, leading to their ubiquitination and degradation. The C-degron recognized by the DesCEND pathway is usually a motif of less than ten residues and can be present in full-length proteins, truncated proteins or proteolytically cleaved forms. The CRL2(KLHDC10) complex specifically recognizes proteins with a proline-glycine (Pro-Gly) or an alanine tail (CAT tail) at the C-terminus, leading to their ubiquitination and degradation. The CRL2(KLHDC10) complex is involved in the ribosome-associated quality control (RQC) pathway, which mediates the extraction of incompletely synthesized nascent chains from stalled ribosomes: CRL2(KLHDC10) acts downstream of NEMF and recognizes CAT tails associated with stalled nascent chains, leading to their ubiquitination and degradation. Participates in the oxidative stress-induced cell death through MAP3K5 activation. Inhibits PPP5C phosphatase activity on MAP3K5. Acts as a regulator of necroptosis. In Bos taurus (Bovine), this protein is Kelch domain-containing protein 10 (KLHDC10).